A 150-amino-acid chain; its full sequence is Cytochrome c oxidase subunit 5A, mitochondrial (150 aa).

Residues 1-41 (MLGAALRRCAVAATTWAGPRGLLHSARTPGPAAAIQSVRCY) constitute a mitochondrion transit peptide. The SIFI-degron signature appears at 2–17 (LGAALRRCAVAATTWA). 2 positions are modified to N6-acetyllysine: lysine 87 and lysine 113. Residue threonine 141 is modified to Phosphothreonine.

It belongs to the cytochrome c oxidase subunit 5A family. As to quaternary structure, component of the cytochrome c oxidase (complex IV, CIV), a multisubunit enzyme composed of 14 subunits. The complex is composed of a catalytic core of 3 subunits MT-CO1, MT-CO2 and MT-CO3, encoded in the mitochondrial DNA, and 11 supernumerary subunits COX4I, COX5A, COX5B, COX6A, COX6B, COX6C, COX7A, COX7B, COX7C, COX8 and NDUFA4, which are encoded in the nuclear genome. The complex exists as a monomer or a dimer and forms supercomplexes (SCs) in the inner mitochondrial membrane with NADH-ubiquinone oxidoreductase (complex I, CI) and ubiquinol-cytochrome c oxidoreductase (cytochrome b-c1 complex, complex III, CIII), resulting in different assemblies (supercomplex SCI(1)III(2)IV(1) and megacomplex MCI(2)III(2)IV(2)). Interacts with AFG1L. Interacts with RAB5IF. In terms of processing, in response to mitochondrial stress, the precursor protein is ubiquitinated by the SIFI complex in the cytoplasm before mitochondrial import, leading to its degradation. Within the SIFI complex, UBR4 initiates ubiquitin chain that are further elongated or branched by KCMF1.

The protein resides in the mitochondrion inner membrane. Its pathway is energy metabolism; oxidative phosphorylation. In terms of biological role, component of the cytochrome c oxidase, the last enzyme in the mitochondrial electron transport chain which drives oxidative phosphorylation. The respiratory chain contains 3 multisubunit complexes succinate dehydrogenase (complex II, CII), ubiquinol-cytochrome c oxidoreductase (cytochrome b-c1 complex, complex III, CIII) and cytochrome c oxidase (complex IV, CIV), that cooperate to transfer electrons derived from NADH and succinate to molecular oxygen, creating an electrochemical gradient over the inner membrane that drives transmembrane transport and the ATP synthase. Cytochrome c oxidase is the component of the respiratory chain that catalyzes the reduction of oxygen to water. Electrons originating from reduced cytochrome c in the intermembrane space (IMS) are transferred via the dinuclear copper A center (CU(A)) of subunit 2 and heme A of subunit 1 to the active site in subunit 1, a binuclear center (BNC) formed by heme A3 and copper B (CU(B)). The BNC reduces molecular oxygen to 2 water molecules using 4 electrons from cytochrome c in the IMS and 4 protons from the mitochondrial matrix. The polypeptide is Cytochrome c oxidase subunit 5A, mitochondrial (COX5A) (Papio anubis (Olive baboon)).